We begin with the raw amino-acid sequence, 517 residues long: Ovoinhibitor (517 aa).

Kazal-like domains are found at residues phenylalanine 67 to proline 132, lysine 133 to leucine 197, glutamate 198 to glutamine 263, glutamate 264 to glutamate 329, arginine 330 to glutamate 394, glutamate 395 to glutamate 460, and aspartate 461 to cysteine 517. Asparagine 72 carries N-linked (GlcNAc...) asparagine glycosylation. Intrachain disulfides connect cysteine 73/cysteine 112, cysteine 90/cysteine 109, cysteine 98/cysteine 130, cysteine 139/cysteine 177, cysteine 155/cysteine 174, cysteine 163/cysteine 195, cysteine 204/cysteine 243, cysteine 221/cysteine 240, cysteine 229/cysteine 261, cysteine 270/cysteine 309, cysteine 287/cysteine 306, cysteine 295/cysteine 327, cysteine 336/cysteine 374, cysteine 352/cysteine 371, cysteine 360/cysteine 392, cysteine 401/cysteine 440, cysteine 418/cysteine 437, cysteine 426/cysteine 458, cysteine 467/cysteine 499, cysteine 477/cysteine 496, and cysteine 485/cysteine 517. N-linked (GlcNAc...) asparagine glycosylation is present at asparagine 186. The N-linked (GlcNAc...) asparagine glycan is linked to asparagine 506.

In terms of processing, glycosylated. As to expression, expressed in oviduct (at protein level). Expressed in egg white (at protein level). Expressed in egg yolk plasma of non-fertilized eggs (at protein level). Expressed in the magnum of the oviduct (at protein level). Expressed in oviduct. Expressed in liver. Expressed in the cortico-medullary border region of the bursa of Fabricius by the bursal secretory dendritic-like cells. Highly expressed in the magnum of the oviduct, and at a lower level in uterus. Weakly expressed in white isthmus and very weakly in infundibulum. Not expressed in duodenum and kidney.

It is found in the secreted. Its function is as follows. Serine protease inhibitor involved in antimicrobial egg defense preventing contamination of table eggs (non-fertilized eggs) and protecting the chick embryo (fertilized eggs). Inhibits trypsin, chymotrypsin, elastase, subtilisin and a proteinase of fungus Aspergillus oryzae. Inhibits calcium-activated potassium channels KCNMA1 (bovine) and slo (Drosophila). Has antibacterial activity against B.thuringiensis LMSA 3.06.004, but not against S.aureus CIP 103 811, P.aeruginosa PAO1, B.cereus ATCC6464 or B.subtilis ATCC 6633. This chain is Ovoinhibitor, found in Gallus gallus (Chicken).